The primary structure comprises 83 residues: Cytochrome b559 subunit alpha (83 aa).

The helical transmembrane segment at 21–35 (VIHSITIPSLFIAGW) threads the bilayer. Histidine 23 serves as a coordination point for heme.

The protein belongs to the PsbE/PsbF family. As to quaternary structure, heterodimer of an alpha subunit and a beta subunit. PSII is composed of 1 copy each of membrane proteins PsbA, PsbB, PsbC, PsbD, PsbE, PsbF, PsbH, PsbI, PsbJ, PsbK, PsbL, PsbM, PsbT, PsbX, PsbY, PsbZ, Psb30/Ycf12, at least 3 peripheral proteins of the oxygen-evolving complex and a large number of cofactors. It forms dimeric complexes. It depends on heme b as a cofactor.

The protein localises to the plastid membrane. This b-type cytochrome is tightly associated with the reaction center of photosystem II (PSII). PSII is a light-driven water:plastoquinone oxidoreductase that uses light energy to abstract electrons from H(2)O, generating O(2) and a proton gradient subsequently used for ATP formation. It consists of a core antenna complex that captures photons, and an electron transfer chain that converts photonic excitation into a charge separation. The chain is Cytochrome b559 subunit alpha from Cuscuta reflexa (Southern Asian dodder).